Reading from the N-terminus, the 174-residue chain is Adipose-secreted signaling protein (174 aa).

Position 2 is an N-acetylalanine (Ala-2). A Phosphothreonine modification is found at Thr-147.

Belongs to the ADISSP family.

The protein resides in the secreted. In terms of biological role, adipocyte-secreted protein (adipokine) that acts as a key regulator for white adipose tissue (WAT) thermogenesis and glucose homeostasis at least in part through activation of protein kinase A (PKA). In Rattus norvegicus (Rat), this protein is Adipose-secreted signaling protein.